Consider the following 468-residue polypeptide: Trehalose-binding lipoprotein LpqY (468 aa).

The signal sequence occupies residues 1–25 (MVMSRGRIPRLGAAVLVALTTAAAA). C26 carries the N-palmitoyl cysteine lipid modification. A lipid anchor (S-diacylglycerol cysteine) is attached at C26. A disulfide bridge connects residues C54 and C372. Alpha,alpha-trehalose-binding residues include D97, N151, W276, F278, G351, and R421.

It belongs to the bacterial solute-binding protein 1 family. In terms of assembly, monomer. The complex is composed of two ATP-binding proteins (SugC), two transmembrane proteins (SugA and SugB) and a solute-binding protein (LpqY).

It localises to the cell inner membrane. Its function is as follows. Part of the ABC transporter complex LpqY-SugA-SugB-SugC, which is highly specific for uptake of trehalose. Involved in the recycling of extracellular trehalose released from trehalose-containing molecules synthesized by M.tuberculosis. Trehalose uptake is essential for virulence. This is Trehalose-binding lipoprotein LpqY (lpqY) from Mycobacterium tuberculosis (strain CDC 1551 / Oshkosh).